A 438-amino-acid polypeptide reads, in one-letter code: DNA primase small subunit (438 aa).

Catalysis depends on residues Glu-63, Asp-127, and Asp-129. The short motif at 139 to 149 (CCSGAGVCLKC) is the Zinc knuckle motif element.

It belongs to the eukaryotic-type primase small subunit family. In terms of assembly, heterodimer of a catalytic subunit Prim1 and a regulatory subunit Prim2, also known as the DNA primase complex. Component of the alpha DNA polymerase complex (also known as the alpha DNA polymerase-primase complex) consisting of four subunits: the catalytic subunit PolA1, the regulatory subunit PolA2, and the primase complex subunits Prim1 and Prim2 respectively. PolA1 associates with the DNA primase complex before association with PolA2. Requires Mg(2+) as cofactor. Mn(2+) serves as cofactor. As to expression, expressed in embryos (at protein level).

The presence of the regulatory subunit Prim2 accelerates the kinetics of initiation and primer extension. In terms of biological role, catalytic subunit of the DNA primase complex and component of the DNA polymerase alpha complex (also known as the alpha DNA polymerase-primase complex) which play an essential role in the initiation of DNA synthesis. During the S phase of the cell cycle, the DNA polymerase alpha complex (composed of a catalytic subunit PolA1, an accessory subunit PolA2 and two primase subunits, the catalytic subunit Prim1 and the regulatory subunit Prim2) is recruited to DNA at the replicative forks. The primase subunit of the polymerase alpha complex initiates DNA synthesis by oligomerising short RNA primers on both leading and lagging strands. These primers are initially extended by the polymerase alpha catalytic subunit and subsequently transferred to polymerase delta and polymerase epsilon for processive synthesis on the lagging and leading strand, respectively. In the primase complex, both subunits are necessary for the initial di-nucleotide formation, but the extension of the primer depends only on the catalytic subunit. Can add both ribo- and deoxynucleotides during elongation of the primers. Binds single stranded DNA. The protein is DNA primase small subunit of Drosophila melanogaster (Fruit fly).